Consider the following 200-residue polypeptide: Probable molybdenum cofactor guanylyltransferase (200 aa).

GTP-binding positions include 9 to 11 (LAG), K21, D69, and D100. D100 contacts Mg(2+).

Belongs to the MobA family. Mg(2+) is required as a cofactor.

The protein localises to the cytoplasm. The catalysed reaction is Mo-molybdopterin + GTP + H(+) = Mo-molybdopterin guanine dinucleotide + diphosphate. In terms of biological role, transfers a GMP moiety from GTP to Mo-molybdopterin (Mo-MPT) cofactor (Moco or molybdenum cofactor) to form Mo-molybdopterin guanine dinucleotide (Mo-MGD) cofactor. The sequence is that of Probable molybdenum cofactor guanylyltransferase from Bacillus cereus (strain ZK / E33L).